The primary structure comprises 458 residues: Histone acetyltransferase Tip60 homolog (458 aa).

The segment at M1–P24 is disordered. Residues V30 to L86 enclose the Tudor-knot domain. Residues K94–I123 form a disordered region. A compositionally biased stretch (basic and acidic residues) spans H101–K116. Positions T168 to P446 constitute an MYST-type HAT domain. The C2HC MYST-type zinc finger occupies I201 to M226. N6-acetyllysine; by autocatalysis is present on K268. Residues I311–V313 and Q318–S324 each bind acetyl-CoA. Catalysis depends on E344, which acts as the Proton donor/acceptor. Residues S348 and S357 each coordinate acetyl-CoA.

This sequence belongs to the MYST (SAS/MOZ) family. As to quaternary structure, interacts with transcription-associated protein trr-1. Probably a component of a complex with histone acetyltransferase (HAT) activity, at least composed of mys-1 and trr-1. Post-translationally, autoacetylation at Lys-268 is required for binding histones with high affinity and for proper function.

The protein resides in the nucleus. It carries out the reaction L-lysyl-[protein] + acetyl-CoA = N(6)-acetyl-L-lysyl-[protein] + CoA + H(+). Functionally, probable catalytic subunit of the Tip60 chromatin-remodeling complex. Plays a role in acetylation of nucleosomal histone H4 and perhaps also H2A, probably acting as a component of the Tip60 histone acetyltransferase complex. Acts in the determination of vulval and distal tip cell (DTC) precursor cell fates. Involved in the positive regulation of transcription factor daf-16, probably acting by histone acetylation; thereby modulating stress resistance. This Caenorhabditis elegans protein is Histone acetyltransferase Tip60 homolog.